The sequence spans 1084 residues: Cellulose synthase A catalytic subunit 6 [UDP-forming] (1084 aa).

An N-acetylmethionine modification is found at Met-1. Residues 1-277 (MNTGGRLIAG…KSSKINPYRM (277 aa)) are Cytoplasmic-facing. Zn(2+) is bound by residues Cys-39, Cys-42, Cys-58, Cys-61, Cys-66, Cys-69, Cys-81, and Cys-84. The RING-type; degenerate zinc finger occupies 39–85 (CQICRDEIELTVDGEPFVACNECAFPVCRPCYEYERREGNQACPQCK). The helical transmembrane segment at 278-298 (LIVLRLVILGLFFHYRILHPV) threads the bilayer. Residues 299-300 (KD) lie on the Extracellular side of the membrane. A helical membrane pass occupies residues 301 to 321 (AYALWLISVICEIWFAVSWVL). Over 322 to 868 (DQFPKWYPIE…INSVVYPWTS (547 aa)) the chain is Cytoplasmic. Ser-360, Lys-366, Glu-367, and Asp-396 together coordinate UDP-alpha-D-glucose. Asp-396 is an active-site residue. Residues 450 to 476 (VRERRAMKRDYEEFKVKINALVATAQK) are a coiled coil. Lys-537 contributes to the UDP-alpha-D-glucose binding site. Mn(2+) is bound by residues Lys-538 and Asp-562. A coiled-coil region spans residues 675–703 (RKAKTVAADKKKKNREASKQIHALENIEE). Asp-785 is an active-site residue. Residues 869–889 (LPLIVYCSLPAICLLTGKFIV) traverse the membrane as a helical segment. Topologically, residues 890–894 (PEISN) are extracellular. The helical transmembrane segment at 895 to 915 (YASILFMALFSSIAITGILEM) threads the bilayer. At 916-930 (QWGKVGIDDWWRNEQ) the chain is on the cytoplasmic side. A helical membrane pass occupies residues 931–951 (FWVIGGVSAHLFALFQGLLKV). Residues 952–980 (LAGVDTNFTVTSKAADDGEFSDLYLFKWT) are Extracellular-facing. Asn-958 carries an N-linked (GlcNAc...) asparagine glycan. Residues 981–1001 (SLLIPPMTLLIINVIGVIVGV) form a helical membrane-spanning segment. Residues 1002–1012 (SDAISNGYDSW) are Cytoplasmic-facing. A helical transmembrane segment spans residues 1013–1033 (GPLFGRLFFALWVIIHLYPFL). Over 1034–1042 (KGLLGKQDR) the chain is Extracellular. A helical membrane pass occupies residues 1043–1063 (MPTIIVVWSILLASILTLLWV). Residues 1064-1084 (RVNPFVAKGGPILEICGLDCL) are Cytoplasmic-facing.

The protein belongs to the glycosyltransferase 2 family. Plant cellulose synthase subfamily. As to quaternary structure, interacts with CESA1 and CESA3. Interacts with STL1 and STL2, but not with GOT1. Binds to CSI1 and CSI3. Interacts with PAT24/TIP1. Requires Zn(2+) as cofactor. Mn(2+) is required as a cofactor. Post-translationally, S-acylated. Expressed in germinating seeds, seedlings, roots, stems, leaves and flowers. Not present in mature flowers.

It localises to the cell membrane. The catalysed reaction is [(1-&gt;4)-beta-D-glucosyl](n) + UDP-alpha-D-glucose = [(1-&gt;4)-beta-D-glucosyl](n+1) + UDP + H(+). It participates in glycan metabolism; plant cellulose biosynthesis. Catalytic subunit of cellulose synthase terminal complexes ('rosettes'), required for beta-1,4-glucan microfibril crystallization, a major mechanism of the cell wall formation. Involved in the primary cell wall formation. The presence of each protein CESA1 and CESA6 is critical for cell expansion. The hypocotyl elongation is based on a CESA6-dependent cell elongation in dark and a CESA6-independent cell elongation in light. The transition between these two mechanisms requires photosynthesis and PHYB, but not CRY1. The CESA6-dependent cell elongation seems to be independent of gibberellic acid, auxin and ethylene. May be involved in sensitivity to isoxaben. Associates with and moves along cortical microtubules for the process of cellulose deposition. The sequence is that of Cellulose synthase A catalytic subunit 6 [UDP-forming] from Arabidopsis thaliana (Mouse-ear cress).